Reading from the N-terminus, the 275-residue chain is NH(3)-dependent NAD(+) synthetase (275 aa).

47 to 54 (GISGGQDS) is a binding site for ATP. Aspartate 53 contributes to the Mg(2+) binding site. Arginine 139 contacts deamido-NAD(+). ATP is bound at residue threonine 159. A Mg(2+)-binding site is contributed by glutamate 164. The deamido-NAD(+) site is built by lysine 172 and aspartate 179. The ATP site is built by lysine 188 and threonine 210. 259 to 260 (HK) lines the deamido-NAD(+) pocket.

Belongs to the NAD synthetase family. In terms of assembly, homodimer.

It catalyses the reaction deamido-NAD(+) + NH4(+) + ATP = AMP + diphosphate + NAD(+) + H(+). Its pathway is cofactor biosynthesis; NAD(+) biosynthesis; NAD(+) from deamido-NAD(+) (ammonia route): step 1/1. Its function is as follows. Catalyzes the ATP-dependent amidation of deamido-NAD to form NAD. Uses ammonia as a nitrogen source. The protein is NH(3)-dependent NAD(+) synthetase of Staphylococcus epidermidis (strain ATCC 35984 / DSM 28319 / BCRC 17069 / CCUG 31568 / BM 3577 / RP62A).